A 587-amino-acid chain; its full sequence is Phosphomethylpyrimidine synthase (587 aa).

Substrate-binding positions include Asn218, Met247, Tyr276, His312, 332 to 334 (SRG), 373 to 376 (DGLR), and Glu412. His416 serves as a coordination point for Zn(2+). Residue Tyr439 coordinates substrate. A Zn(2+)-binding site is contributed by His480. 3 residues coordinate [4Fe-4S] cluster: Cys560, Cys563, and Cys568.

It belongs to the ThiC family. [4Fe-4S] cluster is required as a cofactor.

It carries out the reaction 5-amino-1-(5-phospho-beta-D-ribosyl)imidazole + S-adenosyl-L-methionine = 4-amino-2-methyl-5-(phosphooxymethyl)pyrimidine + CO + 5'-deoxyadenosine + formate + L-methionine + 3 H(+). It functions in the pathway cofactor biosynthesis; thiamine diphosphate biosynthesis. Functionally, catalyzes the synthesis of the hydroxymethylpyrimidine phosphate (HMP-P) moiety of thiamine from aminoimidazole ribotide (AIR) in a radical S-adenosyl-L-methionine (SAM)-dependent reaction. In Porphyromonas gingivalis (strain ATCC 33277 / DSM 20709 / CIP 103683 / JCM 12257 / NCTC 11834 / 2561), this protein is Phosphomethylpyrimidine synthase.